We begin with the raw amino-acid sequence, 306 residues long: Pantothenate kinase (306 aa).

An ATP-binding site is contributed by 91–98 (GSVAVGKS).

The protein belongs to the prokaryotic pantothenate kinase family.

It localises to the cytoplasm. It carries out the reaction (R)-pantothenate + ATP = (R)-4'-phosphopantothenate + ADP + H(+). Its pathway is cofactor biosynthesis; coenzyme A biosynthesis; CoA from (R)-pantothenate: step 1/5. The sequence is that of Pantothenate kinase from Streptococcus pneumoniae serotype 2 (strain D39 / NCTC 7466).